The sequence spans 734 residues: Photosystem I P700 chlorophyll a apoprotein A2 (734 aa).

8 helical membrane-spanning segments follow: residues 46–69 (IFAS…FHVA), 135–158 (LYTG…LHLQ), 175–199 (LNHH…HVAI), 273–291 (MAHH…GHMY), 330–353 (IHFQ…QHMY), 369–395 (AALY…IFFI), 417–439 (AIIS…LYVH), and 517–535 (FLVH…LILV). Cysteine 559 and cysteine 568 together coordinate [4Fe-4S] cluster. Helical transmembrane passes span 575–596 (AFYL…YWHW) and 643–665 (LSVW…MFLI). Chlorophyll a contacts are provided by histidine 654, methionine 662, and tyrosine 670. Tryptophan 671 serves as a coordination point for phylloquinone. Residues 707 to 727 (LVGLAHFSVGYIFTYAAFLIA) form a helical membrane-spanning segment.

Belongs to the PsaA/PsaB family. The PsaA/B heterodimer binds the P700 chlorophyll special pair and subsequent electron acceptors. PSI consists of a core antenna complex that captures photons, and an electron transfer chain that converts photonic excitation into a charge separation. The eukaryotic PSI reaction center is composed of at least 11 subunits. The cofactor is P700 is a chlorophyll a/chlorophyll a' dimer, A0 is one or more chlorophyll a, A1 is one or both phylloquinones and FX is a shared 4Fe-4S iron-sulfur center..

It localises to the plastid. Its subcellular location is the chloroplast thylakoid membrane. The enzyme catalyses reduced [plastocyanin] + hnu + oxidized [2Fe-2S]-[ferredoxin] = oxidized [plastocyanin] + reduced [2Fe-2S]-[ferredoxin]. Its function is as follows. PsaA and PsaB bind P700, the primary electron donor of photosystem I (PSI), as well as the electron acceptors A0, A1 and FX. PSI is a plastocyanin-ferredoxin oxidoreductase, converting photonic excitation into a charge separation, which transfers an electron from the donor P700 chlorophyll pair to the spectroscopically characterized acceptors A0, A1, FX, FA and FB in turn. Oxidized P700 is reduced on the lumenal side of the thylakoid membrane by plastocyanin. This chain is Photosystem I P700 chlorophyll a apoprotein A2, found in Hordeum vulgare (Barley).